A 214-amino-acid polypeptide reads, in one-letter code: Nucleoside triphosphate pyrophosphatase (214 aa).

The Proton acceptor role is filled by D79.

This sequence belongs to the Maf family. A divalent metal cation serves as cofactor.

It is found in the cytoplasm. The catalysed reaction is a ribonucleoside 5'-triphosphate + H2O = a ribonucleoside 5'-phosphate + diphosphate + H(+). It carries out the reaction a 2'-deoxyribonucleoside 5'-triphosphate + H2O = a 2'-deoxyribonucleoside 5'-phosphate + diphosphate + H(+). Functionally, nucleoside triphosphate pyrophosphatase. May have a dual role in cell division arrest and in preventing the incorporation of modified nucleotides into cellular nucleic acids. This is Nucleoside triphosphate pyrophosphatase from Rhodococcus opacus (strain B4).